Reading from the N-terminus, the 260-residue chain is 3'-5' ssDNA/RNA exonuclease TatD (260 aa).

A divalent metal cation contacts are provided by E92, H128, and H153.

The protein belongs to the metallo-dependent hydrolases superfamily. TatD-type hydrolase family. TatD subfamily. Monomer. Mg(2+) is required as a cofactor.

Its subcellular location is the cytoplasm. 3'-5' exonuclease that prefers single-stranded DNA and RNA. May play a role in the H(2)O(2)-induced DNA damage repair. In Pectobacterium parmentieri (strain WPP163) (Pectobacterium wasabiae (strain WPP163)), this protein is 3'-5' ssDNA/RNA exonuclease TatD.